The sequence spans 374 residues: Protein RecA (374 aa).

77 to 84 (GPESSGKT) serves as a coordination point for ATP. The tract at residues 355-374 (AAKTAAADKSAPAKASEAAA) is disordered.

This sequence belongs to the RecA family.

It localises to the cytoplasm. Functionally, can catalyze the hydrolysis of ATP in the presence of single-stranded DNA, the ATP-dependent uptake of single-stranded DNA by duplex DNA, and the ATP-dependent hybridization of homologous single-stranded DNAs. It interacts with LexA causing its activation and leading to its autocatalytic cleavage. The polypeptide is Protein RecA (Synechococcus sp. (strain CC9605)).